Here is a 181-residue protein sequence, read N- to C-terminus: UPF0302 protein LMOf2365_1950 (181 aa).

This sequence belongs to the UPF0302 family.

In Listeria monocytogenes serotype 4b (strain F2365), this protein is UPF0302 protein LMOf2365_1950.